We begin with the raw amino-acid sequence, 393 residues long: Major outer membrane porin, serovar L1 (393 aa).

Positions 1-22 are cleaved as a signal peptide; it reads MKKLLKSVLVFAALSSASSLQA.

This sequence belongs to the chlamydial porin (CP) (TC 1.B.2) family. Part of a disulfide cross-linked outer membrane complex (COMC) composed of the major outer membrane porin (MOMP), the small cysteine-rich protein (OmcA) and the large cysteine-rich periplasmic protein (OmcB).

The protein resides in the cell outer membrane. In terms of biological role, in elementary bodies (EBs, the infectious stage, which is able to survive outside the host cell) provides the structural integrity of the outer envelope through disulfide cross-links with the small cysteine-rich protein and the large cysteine-rich periplasmic protein. It has been described in publications as the Sarkosyl-insoluble COMC (Chlamydia outer membrane complex), and serves as the functional equivalent of peptidoglycan. Functionally, permits diffusion of specific solutes through the outer membrane. This is Major outer membrane porin, serovar L1 (ompA) from Chlamydia trachomatis.